The primary structure comprises 272 residues: MSDEETEQVEEQYEEEEEAQEEEVQEEAPEPEEVQEDAVAEEEREEDEEEEKPRPKLTAPKIPEGEKVDFDDIQKKRQNKDLMELQALIDSHFEARKKEEEELIALKERIEKRRAERAEQQRIRAEKEREPQNRLAEEKARREEEDAKRRAEDDMKKKKALSSMGANYSSYLAKADQKRGKKQTAREMKKKILAERRKPLNIDHLSDDKLRDKAKELWDTLYQLETDKFEFGEKLKRQKYDITTLRSRIDQAQKHSKKAGATAKGKVGGRWK.

The span at 1–50 (MSDEETEQVEEQYEEEEEAQEEEVQEEAPEPEEVQEDAVAEEEREEDEEE) shows a compositional bias: acidic residues. Residues 1 to 75 (MSDEETEQVE…EKVDFDDIQK (75 aa)) form a disordered region. Ser2 bears the N-acetylserine mark. Residue Ser2 is modified to Phosphoserine. The segment covering 63–75 (PEGEKVDFDDIQK) has biased composition (basic and acidic residues). Ser91 is subject to Phosphoserine. Residues 114-156 (RAERAEQQRIRAEKEREPQNRLAEEKARREEEDAKRRAEDDMK) are compositionally biased toward basic and acidic residues. Positions 114 to 193 (RAERAEQQRI…TAREMKKKIL (80 aa)) are disordered. 3 positions are modified to phosphoserine: Ser162, Ser169, and Ser170. Positions 184 to 193 (TAREMKKKIL) are enriched in basic and acidic residues. A Phosphoserine modification is found at Ser206. Tyr222 carries the post-translational modification Phosphotyrosine. The disordered stretch occupies residues 248-272 (RIDQAQKHSKKAGATAKGKVGGRWK).

Belongs to the troponin T family. In terms of tissue distribution, expressed predominantly in skeletal muscle.

Functionally, troponin T is the tropomyosin-binding subunit of troponin, the thin filament regulatory complex which confers calcium-sensitivity to striated muscle actomyosin ATPase activity. The protein is Troponin T, fast skeletal muscle (Tnnt3) of Mus musculus (Mouse).